The following is a 365-amino-acid chain: Peptide chain release factor 1 (365 aa).

Q236 bears the N5-methylglutamine mark.

The protein belongs to the prokaryotic/mitochondrial release factor family. In terms of processing, methylated by PrmC. Methylation increases the termination efficiency of RF1.

It localises to the cytoplasm. Functionally, peptide chain release factor 1 directs the termination of translation in response to the peptide chain termination codons UAG and UAA. This is Peptide chain release factor 1 from Latilactobacillus sakei subsp. sakei (strain 23K) (Lactobacillus sakei subsp. sakei).